The primary structure comprises 298 residues: Movement protein BC1 (298 aa).

The tract at residues 253–273 (LPEASLDPGDSVSQTQSMTKK) is disordered.

The protein belongs to the begomovirus movement protein BC1 family. As to quaternary structure, binds to dimeric supercoiled plasmid DNA. Post-translationally, phosphorylated.

The protein localises to the host cell membrane. It localises to the host microsome membrane. The protein resides in the host endoplasmic reticulum membrane. In terms of biological role, transports viral genome to neighboring plant cells directly through plasmosdesmata, without any budding. The movement protein allows efficient cell to cell propagation, by bypassing the host cell wall barrier. Begomovirus genome is shuttled out of nucleus by Nuclear shuttle protein (NSP) and the movement protein transports the DNA-NSP complex to cell plasmodesmata and facilitates further movement across the cell wall. The protein is Movement protein BC1 of Hewittia sublobata (Coralbush).